The primary structure comprises 21 residues: Cytoplasmic filament protein A (21 aa).

Residues 1–21 (AILELPQSPNVFHPEKPSAVG) form a disordered region.

The protein resides in the cytoplasm. Its function is as follows. Component of the cytoplasmic filaments that run the length of the organism just underneath the cytoplasmic membrane. In Treponema phagedenis, this protein is Cytoplasmic filament protein A (cfpA).